The sequence spans 86 residues: Large ribosomal subunit protein bL31B (86 aa).

The protein belongs to the bacterial ribosomal protein bL31 family. Type B subfamily. In terms of assembly, part of the 50S ribosomal subunit.

The polypeptide is Large ribosomal subunit protein bL31B (Yersinia enterocolitica serotype O:8 / biotype 1B (strain NCTC 13174 / 8081)).